A 195-amino-acid chain; its full sequence is Matrix protein (195 aa).

The protein belongs to the novirhabdovirus matrix protein family. Homomultimer.

Its subcellular location is the virion. It localises to the host cytoplasm. Functionally, the M protein has a crucial role in virus assembly and interacts with the RNP complex as well as with the viral membrane. The protein is Matrix protein (M) of Salmo (IHNV).